The sequence spans 174 residues: Large ribosomal subunit protein uL10 (174 aa).

Belongs to the universal ribosomal protein uL10 family. Part of the ribosomal stalk of the 50S ribosomal subunit. The N-terminus interacts with L11 and the large rRNA to form the base of the stalk. The C-terminus forms an elongated spine to which L12 dimers bind in a sequential fashion forming a multimeric L10(L12)X complex.

Its function is as follows. Forms part of the ribosomal stalk, playing a central role in the interaction of the ribosome with GTP-bound translation factors. The polypeptide is Large ribosomal subunit protein uL10 (Geotalea uraniireducens (strain Rf4) (Geobacter uraniireducens)).